Here is a 357-residue protein sequence, read N- to C-terminus: Anthranilate phosphoribosyltransferase (357 aa).

5-phospho-alpha-D-ribose 1-diphosphate is bound by residues Gly-91, 94–95 (GD), Thr-99, 101–104 (NIST), 119–127 (KHGNRSVSS), and Ser-131. Residue Gly-91 coordinates anthranilate. Ser-103 is a binding site for Mg(2+). Residue Asn-122 participates in anthranilate binding. Arg-177 serves as a coordination point for anthranilate. Residues Asp-235 and Glu-236 each coordinate Mg(2+).

It belongs to the anthranilate phosphoribosyltransferase family. Homodimer. Requires Mg(2+) as cofactor.

It catalyses the reaction N-(5-phospho-beta-D-ribosyl)anthranilate + diphosphate = 5-phospho-alpha-D-ribose 1-diphosphate + anthranilate. It participates in amino-acid biosynthesis; L-tryptophan biosynthesis; L-tryptophan from chorismate: step 2/5. Functionally, catalyzes the transfer of the phosphoribosyl group of 5-phosphorylribose-1-pyrophosphate (PRPP) to anthranilate to yield N-(5'-phosphoribosyl)-anthranilate (PRA). The polypeptide is Anthranilate phosphoribosyltransferase (Shewanella baltica (strain OS195)).